We begin with the raw amino-acid sequence, 123 residues long: Ribonuclease P protein component (123 aa).

It belongs to the RnpA family. As to quaternary structure, consists of a catalytic RNA component (M1 or rnpB) and a protein subunit.

The enzyme catalyses Endonucleolytic cleavage of RNA, removing 5'-extranucleotides from tRNA precursor.. RNaseP catalyzes the removal of the 5'-leader sequence from pre-tRNA to produce the mature 5'-terminus. It can also cleave other RNA substrates such as 4.5S RNA. The protein component plays an auxiliary but essential role in vivo by binding to the 5'-leader sequence and broadening the substrate specificity of the ribozyme. This chain is Ribonuclease P protein component, found in Streptococcus pneumoniae (strain JJA).